A 444-amino-acid polypeptide reads, in one-letter code: Probable D-serine dehydratase (444 aa).

An N6-(pyridoxal phosphate)lysine modification is found at Lys-110.

It belongs to the serine/threonine dehydratase family. DsdA subfamily. Requires pyridoxal 5'-phosphate as cofactor.

It carries out the reaction D-serine = pyruvate + NH4(+). The polypeptide is Probable D-serine dehydratase (Burkholderia thailandensis (strain ATCC 700388 / DSM 13276 / CCUG 48851 / CIP 106301 / E264)).